A 273-amino-acid polypeptide reads, in one-letter code: Homeobox protein HMX2 (273 aa).

Residues 1–152 form a disordered region; sequence MGSKEDAGKG…RQAGAAKKKT (152 aa). Over residues 93–102 the composition is skewed to gly residues; it reads KGSGGSGPGG. The span at 114-123 shows a compositional bias: basic and acidic residues; that stretch reads SDFKEEKERL. Positions 149 to 208 form a DNA-binding region, homeobox; sequence KKKTRTVFSRSQVYQLESTFDMKRYLSSSERACLASSLQLTETQVKTWFQNRRNKWKRQL.

This sequence belongs to the HMX homeobox family.

The protein localises to the nucleus. Transcription factor involved in specification of neuronal cell types and which is required for inner ear and hypothalamus development. The sequence is that of Homeobox protein HMX2 (HMX2) from Homo sapiens (Human).